The chain runs to 188 residues: FMN-dependent NADPH-azoreductase (188 aa).

It belongs to the azoreductase type 2 family. Homotetramer. The cofactor is FMN.

Its function is as follows. Catalyzes the reductive cleavage of azo bond in aromatic azo compounds to the corresponding amines. Requires NADPH, but not NADH, as an electron donor for its activity. This chain is FMN-dependent NADPH-azoreductase (azo1), found in Staphylococcus epidermidis (strain ATCC 12228 / FDA PCI 1200).